Reading from the N-terminus, the 245-residue chain is Ribosomal RNA small subunit methyltransferase G (245 aa).

Residues Gly-85, Phe-90, 108–110 (DST), 136–137 (AE), and Arg-155 contribute to the S-adenosyl-L-methionine site.

The protein belongs to the methyltransferase superfamily. RNA methyltransferase RsmG family.

The protein localises to the cytoplasm. Its function is as follows. Specifically methylates the N7 position of a guanine in 16S rRNA. The chain is Ribosomal RNA small subunit methyltransferase G from Nostoc sp. (strain PCC 7120 / SAG 25.82 / UTEX 2576).